A 461-amino-acid chain; its full sequence is Propionyl-CoA carboxylase regulator (461 aa).

In terms of domain architecture, HTH cro/C1-type spans 11–65; that stretch reads LRELRVKLGLTQKVFAERLGASLPYLNQMENNHRPVSATVVLALAQEFGVDVTKL. The H-T-H motif DNA-binding region spans 22-41; the sequence is QKVFAERLGASLPYLNQMEN.

Belongs to the short-chain fatty acyl-CoA assimilation regulator (ScfR) family.

Its function is as follows. Transcriptional regulator that controls propionyl-CoA assimilation through the methylmalonyl-CoA pathway via regulation of pccB expression. This Cereibacter sphaeroides (strain ATCC 17023 / DSM 158 / JCM 6121 / CCUG 31486 / LMG 2827 / NBRC 12203 / NCIMB 8253 / ATH 2.4.1.) (Rhodobacter sphaeroides) protein is Propionyl-CoA carboxylase regulator.